The following is a 61-amino-acid chain: Alpha-conotoxin-like Lp1.6a (61 aa).

Residues 1–21 (MGMRMMFIIFLFVVLATTVVS) form the signal peptide. Residues 22-44 (FTSGRASDGRNAPANNKVSDLIR) constitute a propeptide that is removed on maturation. Pyrrolidone carboxylic acid is present on Gln-45. Intrachain disulfides connect Cys-47–Cys-53 and Cys-48–Cys-60. Residue Cys-60 is modified to Cysteine amide.

This sequence belongs to the conotoxin A superfamily. Expressed by the venom duct.

It is found in the secreted. Its function is as follows. Alpha-conotoxins act on postsynaptic membranes, they bind to the nicotinic acetylcholine receptors (nAChR) and thus inhibit them. This Conus leopardus (Leopard cone) protein is Alpha-conotoxin-like Lp1.6a.